The following is a 947-amino-acid chain: Bifunctional glutamine synthetase adenylyltransferase/adenylyl-removing enzyme (947 aa).

The interval 1 to 440 (MTPLSSPLSQ…VFNELIGDDE (440 aa)) is adenylyl removase. The adenylyl transferase stretch occupies residues 450–947 (SEPWREVWQD…ASWRKWLVAV (498 aa)).

It belongs to the GlnE family. Requires Mg(2+) as cofactor.

The enzyme catalyses [glutamine synthetase]-O(4)-(5'-adenylyl)-L-tyrosine + phosphate = [glutamine synthetase]-L-tyrosine + ADP. It catalyses the reaction [glutamine synthetase]-L-tyrosine + ATP = [glutamine synthetase]-O(4)-(5'-adenylyl)-L-tyrosine + diphosphate. Its function is as follows. Involved in the regulation of glutamine synthetase GlnA, a key enzyme in the process to assimilate ammonia. When cellular nitrogen levels are high, the C-terminal adenylyl transferase (AT) inactivates GlnA by covalent transfer of an adenylyl group from ATP to specific tyrosine residue of GlnA, thus reducing its activity. Conversely, when nitrogen levels are low, the N-terminal adenylyl removase (AR) activates GlnA by removing the adenylyl group by phosphorolysis, increasing its activity. The regulatory region of GlnE binds the signal transduction protein PII (GlnB) which indicates the nitrogen status of the cell. The protein is Bifunctional glutamine synthetase adenylyltransferase/adenylyl-removing enzyme of Salmonella heidelberg (strain SL476).